A 70-amino-acid polypeptide reads, in one-letter code: Small ribosomal subunit protein bS21B (70 aa).

It belongs to the bacterial ribosomal protein bS21 family.

The polypeptide is Small ribosomal subunit protein bS21B (Rhizobium etli (strain ATCC 51251 / DSM 11541 / JCM 21823 / NBRC 15573 / CFN 42)).